The following is a 280-amino-acid chain: Phosphatidylglycerol--prolipoprotein diacylglyceryl transferase (280 aa).

2 helical membrane-spanning segments follow: residues Phe59–Tyr79 and Gly97–Trp117. An a 1,2-diacyl-sn-glycero-3-phospho-(1'-sn-glycerol)-binding site is contributed by Arg142. The next 2 membrane-spanning stretches (helical) occupy residues Gly207–Phe227 and Phe233–Ile253.

Belongs to the Lgt family.

It is found in the cell inner membrane. It catalyses the reaction L-cysteinyl-[prolipoprotein] + a 1,2-diacyl-sn-glycero-3-phospho-(1'-sn-glycerol) = an S-1,2-diacyl-sn-glyceryl-L-cysteinyl-[prolipoprotein] + sn-glycerol 1-phosphate + H(+). Its pathway is protein modification; lipoprotein biosynthesis (diacylglyceryl transfer). In terms of biological role, catalyzes the transfer of the diacylglyceryl group from phosphatidylglycerol to the sulfhydryl group of the N-terminal cysteine of a prolipoprotein, the first step in the formation of mature lipoproteins. The sequence is that of Phosphatidylglycerol--prolipoprotein diacylglyceryl transferase from Gluconacetobacter diazotrophicus (strain ATCC 49037 / DSM 5601 / CCUG 37298 / CIP 103539 / LMG 7603 / PAl5).